We begin with the raw amino-acid sequence, 452 residues long: Bis(5'-adenosyl)-triphosphatase enpp4 (452 aa).

An N-terminal signal peptide occupies residues 1 to 19 (MFGRVFIVAVLYCITICKG). Topologically, residues 20-407 (EDPTNSSTPK…NQWCIQVSEA (388 aa)) are extracellular. Asn24 is a glycosylation site (N-linked (GlcNAc...) asparagine). The Zn(2+) site is built by Asp36 and Thr72. The active-site AMP-threonine intermediate is the Thr72. Asn93 contacts substrate. The N-linked (GlcNAc...) asparagine glycan is linked to Asn107. Tyr154 serves as a coordination point for substrate. Residues Asn155 and Asn175 are each glycosylated (N-linked (GlcNAc...) asparagine). Zn(2+) contacts are provided by Asp189 and His193. Position 189 (Asp189) interacts with substrate. Residue Asn202 is glycosylated (N-linked (GlcNAc...) asparagine). Zn(2+) contacts are provided by Asp237 and His238. Cys254 and Cys287 are joined by a disulfide. N-linked (GlcNAc...) asparagine glycans are attached at residues Asn259 and Asn327. A Zn(2+)-binding site is contributed by His336. The N-linked (GlcNAc...) asparagine glycan is linked to Asn386. Cys394 and Cys401 form a disulfide bridge. Residues 408 to 428 (IGIVIGAIMVLTTLTCIIIML) traverse the membrane as a helical segment. The Cytoplasmic segment spans residues 429–452 (KKKMPSARPFSRLQFQDDDDPLIG).

Belongs to the nucleotide pyrophosphatase/phosphodiesterase family. Requires Zn(2+) as cofactor.

The protein resides in the cell membrane. It catalyses the reaction P(1),P(3)-bis(5'-adenosyl) triphosphate + H2O = AMP + ADP + 2 H(+). Its function is as follows. Hydrolyzes extracellular Ap3A into AMP and ADP, and Ap4A into AMP and ATP. Ap3A and Ap4A are diadenosine polyphosphates thought to induce proliferation of vascular smooth muscle cells. Acts as a procoagulant, mediating platelet aggregation at the site of nascent thrombus via release of ADP from Ap3A and activation of ADP receptors. The protein is Bis(5'-adenosyl)-triphosphatase enpp4 (enpp4) of Xenopus laevis (African clawed frog).